A 525-amino-acid polypeptide reads, in one-letter code: Nuclear polyadenylated RNA-binding protein NAB2 (525 aa).

Disordered stretches follow at residues 102-160 (SDIA…QLQP) and 196-236 (QFAP…STRF). A compositionally biased stretch (low complexity) spans 103-160 (DIAQQQQQQQQQQQPDIAQQQPQQQPQQQPQQQPQQQPQQQPQQQPQQQPQQQPQLQP). 9 repeat units span residues 121-124 (QQQP), 125-128 (QQQP), 129-132 (QQQP), 133-136 (QQQP), 137-140 (QQQP), 141-144 (QQQP), 145-148 (QQQP), 149-152 (QQQP), and 153-156 (QQQP). The tract at residues 121-156 (QQQPQQQPQQQPQQQPQQQPQQQPQQQPQQQPQQQP) is 10 X 4 AA tandem repeats of Q-Q-Q-P. One copy of the 10; approximate repeat lies at 157 to 160 (QLQP). Omega-N-methylarginine is present on residues Arg-209 and Arg-222. Residues 209–228 (RGGGAVGKNRRGGRGGNRGG) are RNA-binding RGG-box. Residues 209–239 (RGGGAVGKNRRGGRGGNRGGRNNNSTRFNPL) are PY-NLS nuclear localization signal. Position 254 is a phosphothreonine (Thr-254). 7 C3H1-type zinc fingers span residues 262 to 278 (CRLF…PHAH), 283 to 300 (CNEY…EFLH), 340 to 355 (CKFG…PFGH), 371 to 386 (CDKN…RKAH), 415 to 430 (CKFG…KYRH), 437 to 452 (CREG…LFGH), and 458 to 473 (CRFG…LFRH). The tract at residues 503–525 (NAIIENAPPQTSFTHQEQDTEMN) is disordered. The span at 510 to 525 (PPQTSFTHQEQDTEMN) shows a compositional bias: polar residues.

Belongs to the ZC3H14 family. In terms of assembly, interacts with MLP1. Interacts with PUB1. Post-translationally, methylated by HMT1.

The protein resides in the nucleus. It is found in the cytoplasm. Its function is as follows. RNA-binding protein involved in RNA processing and transcription regulation. Acts as a regulator of mRNA stability: binds the poly(A) tail of mRNAs and pre-mRNAs, preventing their degradation by the exosome. Involved in the biogenesis of circular RNAs (circRNAs) which are produced by back-splicing circularization of pre-mRNAs. Involved in mRNA poly(A) tail length control and nuclear export. Functions in surveillance and the packaging leading to generation of export-competent mRNPs. Controls both mRNP compaction that facilitates movement through nuclear pore complexes and the length of transcript poly(A) tails. Also acts as a regulator of transcription. Associates directly with nascent RNA polymerase II transcripts and remains associated during subsequent nuclear RNA processing reactions. Required for RNA polymerase III (RNAPIII) transcription: required for the occupancy of RNAPIII and Transcription factor IIIB (TFIIIB) at target genes, possibly via direct association with nascent RNAPIII transcripts. This is Nuclear polyadenylated RNA-binding protein NAB2 from Saccharomyces cerevisiae (strain ATCC 204508 / S288c) (Baker's yeast).